Here is a 402-residue protein sequence, read N- to C-terminus: NADH-quinone oxidoreductase subunit D (402 aa).

The protein belongs to the complex I 49 kDa subunit family. As to quaternary structure, NDH-1 is composed of 14 different subunits. Subunits NuoB, C, D, E, F, and G constitute the peripheral sector of the complex.

The protein resides in the cell inner membrane. The catalysed reaction is a quinone + NADH + 5 H(+)(in) = a quinol + NAD(+) + 4 H(+)(out). In terms of biological role, NDH-1 shuttles electrons from NADH, via FMN and iron-sulfur (Fe-S) centers, to quinones in the respiratory chain. The immediate electron acceptor for the enzyme in this species is believed to be ubiquinone. Couples the redox reaction to proton translocation (for every two electrons transferred, four hydrogen ions are translocated across the cytoplasmic membrane), and thus conserves the redox energy in a proton gradient. This is NADH-quinone oxidoreductase subunit D from Protochlamydia amoebophila (strain UWE25).